The primary structure comprises 353 residues: Photosystem II protein D1 (353 aa).

An N-acetylthreonine modification is found at Thr2. Thr2 is subject to Phosphothreonine. Transmembrane regions (helical) follow at residues 29–46 (YIGW…TATS), 118–133 (HFLL…EWEL), and 142–156 (WIAV…AATA). His118 is a binding site for chlorophyll a. Tyr126 is a binding site for pheophytin a. Residues Asp170 and Glu189 each contribute to the [CaMn4O5] cluster site. A helical transmembrane segment spans residues 197–218 (FHMLGVAGVFGGSLFSAMHGSL). Chlorophyll a is bound at residue His198. A quinone contacts are provided by residues His215 and 264-265 (SF). His215 contributes to the Fe cation binding site. His272 provides a ligand contact to Fe cation. Residues 274-288 (FLAAWPVVGIWFTAL) traverse the membrane as a helical segment. Residues His332, Glu333, Asp342, and Ala344 each coordinate [CaMn4O5] cluster. Positions 345 to 353 (AMEAPSVNG) are excised as a propeptide.

This sequence belongs to the reaction center PufL/M/PsbA/D family. As to quaternary structure, PSII is composed of 1 copy each of membrane proteins PsbA, PsbB, PsbC, PsbD, PsbE, PsbF, PsbH, PsbI, PsbJ, PsbK, PsbL, PsbM, PsbT, PsbX, PsbY, PsbZ, Psb30/Ycf12, at least 3 peripheral proteins of the oxygen-evolving complex and a large number of cofactors. It forms dimeric complexes. The D1/D2 heterodimer binds P680, chlorophylls that are the primary electron donor of PSII, and subsequent electron acceptors. It shares a non-heme iron and each subunit binds pheophytin, quinone, additional chlorophylls, carotenoids and lipids. D1 provides most of the ligands for the Mn4-Ca-O5 cluster of the oxygen-evolving complex (OEC). There is also a Cl(-1) ion associated with D1 and D2, which is required for oxygen evolution. The PSII complex binds additional chlorophylls, carotenoids and specific lipids. is required as a cofactor. Tyr-161 forms a radical intermediate that is referred to as redox-active TyrZ, YZ or Y-Z. In terms of processing, C-terminally processed by CTPA; processing is essential to allow assembly of the oxygen-evolving complex and thus photosynthetic growth.

The protein localises to the plastid. The protein resides in the chloroplast thylakoid membrane. It catalyses the reaction 2 a plastoquinone + 4 hnu + 2 H2O = 2 a plastoquinol + O2. Its function is as follows. Photosystem II (PSII) is a light-driven water:plastoquinone oxidoreductase that uses light energy to abstract electrons from H(2)O, generating O(2) and a proton gradient subsequently used for ATP formation. It consists of a core antenna complex that captures photons, and an electron transfer chain that converts photonic excitation into a charge separation. The D1/D2 (PsbA/PsbD) reaction center heterodimer binds P680, the primary electron donor of PSII as well as several subsequent electron acceptors. The chain is Photosystem II protein D1 from Phaseolus vulgaris (Kidney bean).